We begin with the raw amino-acid sequence, 711 residues long: Consortin (711 aa).

Disordered stretches follow at residues 1–157, 294–332, 370–389, 394–432, and 457–496; these read MDDS…NDPP, AVGT…GCHQ, ETAG…KDSS, PPTE…PGLI, and PRDQ…ESAL. Over 1–650 the chain is Cytoplasmic; sequence MDDSDPPTYS…LEQDEVGGGS (650 aa). Positions 63–77 are enriched in polar residues; the sequence is VSEQDSLNNNESFPS. Residues 109–120 show a composition bias toward basic residues; that stretch reads PAKRSPRAKKSS. 2 stretches are compositionally biased toward basic and acidic residues: residues 396-407 and 457-471; these read TEDHCGVARDPK and PRDQ…EPRQ. A compositionally biased stretch (polar residues) spans 478-487; that stretch reads DGKSAQSQAG. Residues 651–671 traverse the membrane as a helical segment; sequence CILLILLCIATVFLSVGGTAL. Over 672–711 the chain is Extracellular; that stretch reads YCTLGNIESPVCTDFADNVDFYYTKLLQGVAGLKHWVYLS.

It belongs to the CNST family. As to quaternary structure, interacts with connexins GJA1/CX43, GJB1/CX32, GJB2/CX26, GJB3/CX31, GJB6/CX30 and GJC1/CX45. Also interacts with GGA1 and GGA2. Does not interact with PANX1.

Its subcellular location is the cell membrane. It is found in the golgi apparatus. It localises to the trans-Golgi network membrane. The protein resides in the cytoplasmic vesicle. The protein localises to the secretory vesicle. Its function is as follows. Required for targeting of connexins to the plasma membrane. The protein is Consortin (Cnst) of Mus musculus (Mouse).